A 548-amino-acid chain; its full sequence is Chaperonin GroEL 1 (548 aa).

ATP contacts are provided by residues 30-33, Lys51, 87-91, Gly415, 479-481, and Asp495; these read TLGP, DGTTT, and NAA.

It belongs to the chaperonin (HSP60) family. As to quaternary structure, forms a cylinder of 14 subunits composed of two heptameric rings stacked back-to-back. Interacts with the co-chaperonin GroES.

It is found in the cytoplasm. The enzyme catalyses ATP + H2O + a folded polypeptide = ADP + phosphate + an unfolded polypeptide.. Functionally, together with its co-chaperonin GroES, plays an essential role in assisting protein folding. The GroEL-GroES system forms a nano-cage that allows encapsulation of the non-native substrate proteins and provides a physical environment optimized to promote and accelerate protein folding. This Escherichia coli O1:K1 / APEC protein is Chaperonin GroEL 1.